The following is a 346-amino-acid chain: N-acetyl-gamma-glutamyl-phosphate reductase (346 aa).

Cys-151 is an active-site residue.

Belongs to the NAGSA dehydrogenase family. Type 1 subfamily.

The protein resides in the cytoplasm. The enzyme catalyses N-acetyl-L-glutamate 5-semialdehyde + phosphate + NADP(+) = N-acetyl-L-glutamyl 5-phosphate + NADPH + H(+). The protein operates within amino-acid biosynthesis; L-arginine biosynthesis; N(2)-acetyl-L-ornithine from L-glutamate: step 3/4. Functionally, catalyzes the NADPH-dependent reduction of N-acetyl-5-glutamyl phosphate to yield N-acetyl-L-glutamate 5-semialdehyde. In Ehrlichia chaffeensis (strain ATCC CRL-10679 / Arkansas), this protein is N-acetyl-gamma-glutamyl-phosphate reductase.